The sequence spans 255 residues: uncharacterized protein (255 aa).

The segment at 42-67 is disordered; that stretch reads ACSGSPPEPGKGRPDTTPEQEVPVTA.

This is an uncharacterized protein from Mycobacterium tuberculosis (strain CDC 1551 / Oshkosh).